The sequence spans 389 residues: 1-deoxy-D-xylulose 5-phosphate reductoisomerase (389 aa).

NADPH contacts are provided by Ser11, Gly12, Ser13, Val14, Asn39, and Asn122. Residue Lys123 coordinates 1-deoxy-D-xylulose 5-phosphate. Glu124 is a binding site for NADPH. A Mn(2+)-binding site is contributed by Asp148. 1-deoxy-D-xylulose 5-phosphate contacts are provided by Ser149, Glu150, Ser174, and His197. Glu150 is a binding site for Mn(2+). Residue Gly203 coordinates NADPH. Residues Ser210, Asn215, Lys216, and Glu219 each contribute to the 1-deoxy-D-xylulose 5-phosphate site. Mn(2+) is bound at residue Glu219.

Belongs to the DXR family. Requires Mg(2+) as cofactor. It depends on Mn(2+) as a cofactor.

It catalyses the reaction 2-C-methyl-D-erythritol 4-phosphate + NADP(+) = 1-deoxy-D-xylulose 5-phosphate + NADPH + H(+). The protein operates within isoprenoid biosynthesis; isopentenyl diphosphate biosynthesis via DXP pathway; isopentenyl diphosphate from 1-deoxy-D-xylulose 5-phosphate: step 1/6. Its function is as follows. Catalyzes the NADPH-dependent rearrangement and reduction of 1-deoxy-D-xylulose-5-phosphate (DXP) to 2-C-methyl-D-erythritol 4-phosphate (MEP). This Leptospira interrogans serogroup Icterohaemorrhagiae serovar Lai (strain 56601) protein is 1-deoxy-D-xylulose 5-phosphate reductoisomerase.